We begin with the raw amino-acid sequence, 275 residues long: Large ribosomal subunit protein uL2 (275 aa).

Disordered regions lie at residues 1–24 (MGIR…FSEI) and 208–275 (AGRT…RRRR). A compositionally biased stretch (polar residues) spans 12–22 (GTRQATVSDFS). Basic residues-rich tracts occupy residues 208 to 219 (AGRTRHLGRRPQ) and 255 to 275 (LGKK…RRRR).

It belongs to the universal ribosomal protein uL2 family. In terms of assembly, part of the 50S ribosomal subunit. Forms a bridge to the 30S subunit in the 70S ribosome.

In terms of biological role, one of the primary rRNA binding proteins. Required for association of the 30S and 50S subunits to form the 70S ribosome, for tRNA binding and peptide bond formation. It has been suggested to have peptidyltransferase activity; this is somewhat controversial. Makes several contacts with the 16S rRNA in the 70S ribosome. This chain is Large ribosomal subunit protein uL2, found in Picosynechococcus sp. (strain ATCC 27264 / PCC 7002 / PR-6) (Agmenellum quadruplicatum).